The chain runs to 253 residues: Ribonuclease HII (253 aa).

In terms of domain architecture, RNase H type-2 spans asparagine 70–leucine 253. A divalent metal cation contacts are provided by aspartate 76, glutamate 77, and aspartate 168.

This sequence belongs to the RNase HII family. The cofactor is Mn(2+). Mg(2+) is required as a cofactor.

It is found in the cytoplasm. It carries out the reaction Endonucleolytic cleavage to 5'-phosphomonoester.. In terms of biological role, endonuclease that specifically degrades the RNA of RNA-DNA hybrids. The sequence is that of Ribonuclease HII from Streptococcus agalactiae serotype Ia (strain ATCC 27591 / A909 / CDC SS700).